Reading from the N-terminus, the 322-residue chain is p55-v-Fos-transforming protein (322 aa).

A disordered region spans residues 69-95 (APGGRGQSIGRRGKVEQLSPEEEEKRR). The 64-residue stretch at 91–154 (EEKRRIRRER…EKLEFILAAH (64 aa)) folds into the bZIP domain. The tract at residues 93 to 113 (KRRIRRERNKMAAAKCRNRRR) is basic motif. The leucine-zipper stretch occupies residues 119-147 (LQAETDQLEEEKSALQAEIANLLKEKEKL). The disordered stretch occupies residues 298–322 (AAHRKGSSSNEPSSDSLSSPTLLAL). Residues 304 to 316 (SSSNEPSSDSLSS) show a composition bias toward low complexity.

It belongs to the bZIP family. Fos subfamily.

It localises to the host nucleus. The polypeptide is p55-v-Fos-transforming protein (V-FOS) (Galliformes).